Consider the following 408-residue polypeptide: (R)-2-hydroxyisocaproyl-CoA dehydratase alpha subunit (408 aa).

A substrate-binding site is contributed by Glu55. Cys84, Cys117, and Cys346 together coordinate [4Fe-4S] cluster.

The protein belongs to the FldB/FldC dehydratase alpha/beta subunit family. In terms of assembly, part of the heterodimeric complex HadBC composed of (R)-2-hydroxyisocaproyl-CoA dehydratase alpha (HadB) and beta (HadC) subunit. Requires [4Fe-4S] cluster as cofactor.

The enzyme catalyses (R)-2-hydroxy-4-methylpentanoyl-CoA = 4-methylpent-2-enoyl-CoA + H2O. Activated by HadI. Its function is as follows. Involved in the reductive branch of L-leucine fermentation. Catalyzes the irreversible beta/alpha-elimination of water from (R)-2-hydroxyisocaproyl-CoA to yield isocaprenoyl-CoA. This beta/alpha-dehydration depends on the reductive formation of ketyl radicals on the substrate generated by injection of a single electron from the ATP-dependent activator protein HadI. The enzyme is specific for the R-isomer. In Clostridioides difficile (Peptoclostridium difficile), this protein is (R)-2-hydroxyisocaproyl-CoA dehydratase alpha subunit.